Here is a 347-residue protein sequence, read N- to C-terminus: Druantia protein DruD (347 aa).

It localises to the cytoplasm. Functionally, component of antiviral defense system Druantia type I, composed of DruA, DruB, DruC, DruD and DruE. Expression of Druantia in E.coli (strain MG1655) confers resistance to phage lambda, SECphi18, SECphi27 and T4. This Escherichia coli (strain UMEA 4076-1) protein is Druantia protein DruD.